The following is a 410-amino-acid chain: Histidine--tRNA ligase (410 aa).

The protein belongs to the class-II aminoacyl-tRNA synthetase family. In terms of assembly, homodimer.

The protein localises to the cytoplasm. It catalyses the reaction tRNA(His) + L-histidine + ATP = L-histidyl-tRNA(His) + AMP + diphosphate + H(+). The chain is Histidine--tRNA ligase from Elusimicrobium minutum (strain Pei191).